A 433-amino-acid chain; its full sequence is MSFPKELEKVLEITKAQNVWRRTQTLNLIASENVMSPLAESVYMSDFMSRYAEGKPYKRYYQGTKYTDEIETLAMDLMNEITNSKDCDLRPTSGTIANAAVFRVLAEPGDKALIAPVQAGAHVSHTKFGTLGALGIQHIEMPFDEENINVDVDKAIKMIEEVKPKFVVLGGSLYLFPHPTKELAPHVHAVGAKLVYDAAHVYGLIEGKVWSSPLKEGADIMTVSTHKTFPGPQGGAIFSDGSEVFKQVSRTIFPWFVSNHHLHRLPATAVTAIEMKYFGESYANQITRNSKALAEALAERGFKVIGENLGYTKSHQVAVDVRQFGGGNKIAKLLEDANIIVNKNLLPYDKPENVSDPSGLRIGVQEMTRYGMKESEMEEIAELFKKVIIDKKDVNKVKKEVIDMRKNFLEVKYTFDDMKDLEKYSSKSLKLII.

121–123 (AHV) contacts (6S)-5,6,7,8-tetrahydrofolate. The residue at position 227 (K227) is an N6-(pyridoxal phosphate)lysine. E243 lines the (6S)-5,6,7,8-tetrahydrofolate pocket.

Belongs to the SHMT family. As to quaternary structure, homodimer. Pyridoxal 5'-phosphate is required as a cofactor.

The protein resides in the cytoplasm. Its pathway is amino-acid biosynthesis; glycine biosynthesis; glycine from L-serine: step 1/1. Catalyzes the reversible interconversion of serine and glycine with a modified folate serving as the one-carbon carrier. Also exhibits a pteridine-independent aldolase activity toward beta-hydroxyamino acids, producing glycine and aldehydes, via a retro-aldol mechanism. This Saccharolobus islandicus (strain M.14.25 / Kamchatka #1) (Sulfolobus islandicus) protein is Serine hydroxymethyltransferase.